A 73-amino-acid polypeptide reads, in one-letter code: MAKKDGVIEIEGSVIEALPNAMFRVELTNGHKVLAHISGKMRQHYIRILPEDRVIVELSPYDLTRGRIVYRYK.

The 73-residue stretch at 1–73 (MAKKDGVIEI…TRGRIVYRYK (73 aa)) folds into the S1-like domain.

This sequence belongs to the IF-1 family. Component of the 30S ribosomal translation pre-initiation complex which assembles on the 30S ribosome in the order IF-2 and IF-3, IF-1 and N-formylmethionyl-tRNA(fMet); mRNA recruitment can occur at any time during PIC assembly.

It localises to the cytoplasm. Functionally, one of the essential components for the initiation of protein synthesis. Stabilizes the binding of IF-2 and IF-3 on the 30S subunit to which N-formylmethionyl-tRNA(fMet) subsequently binds. Helps modulate mRNA selection, yielding the 30S pre-initiation complex (PIC). Upon addition of the 50S ribosomal subunit IF-1, IF-2 and IF-3 are released leaving the mature 70S translation initiation complex. This is Translation initiation factor IF-1 from Leifsonia xyli subsp. xyli (strain CTCB07).